The following is a 267-amino-acid chain: NAD kinase 2 (267 aa).

Asp-50 serves as the catalytic Proton acceptor. Residues Asp-50 to Gly-51, Lys-55, Asn-122 to Glu-123, Arg-149, Asp-151, Thr-162 to Ser-167, and Ala-186 contribute to the NAD(+) site.

It belongs to the NAD kinase family. It depends on a divalent metal cation as a cofactor.

It localises to the cytoplasm. It catalyses the reaction NAD(+) + ATP = ADP + NADP(+) + H(+). In terms of biological role, involved in the regulation of the intracellular balance of NAD and NADP, and is a key enzyme in the biosynthesis of NADP. Catalyzes specifically the phosphorylation on 2'-hydroxyl of the adenosine moiety of NAD to yield NADP. This chain is NAD kinase 2, found in Listeria monocytogenes serovar 1/2a (strain ATCC BAA-679 / EGD-e).